The sequence spans 323 residues: ComG operon protein 2 (323 aa).

The next 3 membrane-spanning stretches (helical) occupy residues 93 to 113 (YPLFLIFTVAVMFYMLQSIII), 143 to 163 (LVIILLVLFTAGIGIYYWLVF), and 296 to 316 (MIYGFVAAMILLVYLSMLVPM).

This sequence belongs to the GSP F family.

The protein localises to the cell membrane. Functionally, required for transformation and DNA binding. The protein is ComG operon protein 2 (comGB) of Bacillus subtilis (strain 168).